A 104-amino-acid chain; its full sequence is Large ribosomal subunit protein bL21 (104 aa).

It belongs to the bacterial ribosomal protein bL21 family. In terms of assembly, part of the 50S ribosomal subunit. Contacts protein L20.

Functionally, this protein binds to 23S rRNA in the presence of protein L20. The protein is Large ribosomal subunit protein bL21 of Acidiphilium cryptum (strain JF-5).